Consider the following 279-residue polypeptide: Movement protein (279 aa).

It belongs to the cucumovirus movement protein family.

The protein resides in the host cell junction. Its subcellular location is the host plasmodesma. Its function is as follows. Transports viral genome to neighboring plant cells directly through plasmosdesmata, without any budding. The movement protein allows efficient cell to cell propagation, by bypassing the host cell wall barrier. Acts by forming a tubular structure at the host plasmodesmata, enlarging it enough to allow free passage of virion capsids. The protein is Movement protein of Cucumber mosaic virus (strain Kin) (CMV).